Consider the following 245-residue polypeptide: Derlin-1 (245 aa).

Topologically, residues 1–17 (MDAGVWYRSLPRFTRYW) are cytoplasmic. Residues 18 to 38 (LTATVVLSMLCRFDVIPLHWL) traverse the membrane as a helical segment. The Lumenal portion of the chain corresponds to 39-58 (HLDRSAVFSKLQLWRCMTSL). The chain crosses the membrane as a helical span at residues 59–79 (FVFPISSNTAFHFLINCFFIV). Residues 80–99 (QYSSKLEKDQYSRSPADYLY) lie on the Cytoplasmic side of the membrane. A helical transmembrane segment spans residues 100 to 120 (LLIVSAVLANIGGMIFNVYFL). Over 121-156 (MDTLVLAITYIWCQLNKDVTVSFWFGTRFKAMYLPW) the chain is Lumenal. The helical transmembrane segment at 157-177 (VLAAFEFIFHFSLASLVGIFV) threads the bilayer. Residues 178 to 245 (GHVYYFFKFQ…WGRGMTLGRN (68 aa)) lie on the Cytoplasmic side of the membrane. A disordered region spans residues 218–245 (FGLPPESRAPPRQATESPWGRGMTLGRN).

Belongs to the derlin family.

The protein localises to the endoplasmic reticulum membrane. Functionally, may be involved in the degradation process of specific misfolded endoplasmic reticulum (ER) luminal proteins. May also involved in endoplasmic reticulum stress-induced pre-emptive quality control, a mechanism that selectively attenuates the translocation of newly synthesized proteins into the endoplasmic reticulum and reroutes them to the cytosol for proteasomal degradation. This Drosophila melanogaster (Fruit fly) protein is Derlin-1.